Reading from the N-terminus, the 312-residue chain is Serine/threonine-protein phosphatase PP1 isozyme 5 (312 aa).

Ala-2 is subject to N-acetylalanine. Mn(2+) is bound by residues Asp-70, His-72, Asp-98, and Asn-130. His-131 (proton donor) is an active-site residue. Residues His-179 and His-254 each contribute to the Mn(2+) site.

This sequence belongs to the PPP phosphatase family. PP-1 subfamily. Mn(2+) is required as a cofactor.

Its subcellular location is the nucleus. The protein localises to the cytoplasm. It catalyses the reaction O-phospho-L-seryl-[protein] + H2O = L-seryl-[protein] + phosphate. It carries out the reaction O-phospho-L-threonyl-[protein] + H2O = L-threonyl-[protein] + phosphate. Its activity is regulated as follows. Phosphatase activity is strongly reduced by the protein phosphatase inhibitor 2 (I-2). Serine/threonine-protein phosphatase that possesses phosphatase activity toward para-nitrophenyl phosphate (pNPP) in vitro. This Arabidopsis thaliana (Mouse-ear cress) protein is Serine/threonine-protein phosphatase PP1 isozyme 5.